Reading from the N-terminus, the 422-residue chain is Glycine amidinotransferase, mitochondrial (422 aa).

The N-terminal 37 residues, 1–37, are a transit peptide targeting the mitochondrion; that stretch reads MLRVRCLRGGSRGAEAVHYIGSMLRKSFVGWVQRSFQ. Catalysis depends on residues D253 and H302. C406 serves as the catalytic Amidino-cysteine intermediate.

This sequence belongs to the amidinotransferase family. As to quaternary structure, homodimer. As to expression, ubiquitously expressed in adult tissues, with highest levels in muscle and intermediate levels in eye, heart, liver, stomach and testis. In stage 28 embryos, expression is higher in the dorsal and ventral parts of the trunk than in the head. In middle gastrulae, expression is highest around the yolk plug, while in stage 15 and tailbud stage embryos, expression is largely restricted to the region around the presumptive notochord and gut.

Its subcellular location is the mitochondrion inner membrane. The catalysed reaction is L-arginine + glycine = guanidinoacetate + L-ornithine. The protein operates within amine and polyamine biosynthesis; creatine biosynthesis; creatine from L-arginine and glycine: step 1/2. In terms of biological role, catalyzes the biosynthesis of guanidinoacetate, the immediate precursor of creatine. Creatine plays a vital role in energy metabolism in muscle tissues. May play a role in embryonic and central nervous system development. The protein is Glycine amidinotransferase, mitochondrial of Xenopus laevis (African clawed frog).